The chain runs to 464 residues: Kynurenine 3-monooxygenase (464 aa).

This sequence belongs to the aromatic-ring hydroxylase family. KMO subfamily. FAD serves as cofactor.

It carries out the reaction L-kynurenine + NADPH + O2 + H(+) = 3-hydroxy-L-kynurenine + NADP(+) + H2O. It functions in the pathway cofactor biosynthesis; NAD(+) biosynthesis; quinolinate from L-kynurenine: step 1/3. Functionally, catalyzes the hydroxylation of L-kynurenine (L-Kyn) to form 3-hydroxy-L-kynurenine (L-3OHKyn). Required for synthesis of quinolinic acid. This Myxococcus xanthus (strain DK1622) protein is Kynurenine 3-monooxygenase.